A 349-amino-acid chain; its full sequence is Meiotic recombination protein DMC1 homolog (349 aa).

Position 138-145 (138-145 (GEFRSGKT)) interacts with ATP. DsDNA is bound at residue Arg-240. Positions 240, 243, 246, 252, and 320 each coordinate ssDNA. DsDNA is bound by residues Arg-246 and Arg-252.

Belongs to the RecA family. DMC1 subfamily. In terms of assembly, double stacked ring-shaped homooctamer.

Its subcellular location is the nucleus. Its function is as follows. May participate in meiotic recombination. The chain is Meiotic recombination protein DMC1 homolog (LIM15) from Lilium longiflorum (Trumpet lily).